The chain runs to 182 residues: Large ribosomal subunit protein uL16 (182 aa).

The disordered stretch occupies residues 140-182; sequence EKPTQVGKAPPKSSFLPSDETETAAAQAGTEASSASSVTPLES. The segment covering 162–176 has biased composition (low complexity); sequence TAAAQAGTEASSASS.

This sequence belongs to the universal ribosomal protein uL16 family. In terms of assembly, part of the 50S ribosomal subunit.

Binds 23S rRNA and is also seen to make contacts with the A and possibly P site tRNAs. This Prochlorococcus marinus (strain SARG / CCMP1375 / SS120) protein is Large ribosomal subunit protein uL16.